The primary structure comprises 452 residues: Phosphoglucosamine mutase (452 aa).

The active-site Phosphoserine intermediate is the S108. Mg(2+) is bound by residues S108, D247, D249, and D251. S108 bears the Phosphoserine mark.

It belongs to the phosphohexose mutase family. It depends on Mg(2+) as a cofactor. Post-translationally, activated by phosphorylation.

The catalysed reaction is alpha-D-glucosamine 1-phosphate = D-glucosamine 6-phosphate. In terms of biological role, catalyzes the conversion of glucosamine-6-phosphate to glucosamine-1-phosphate. In Paraburkholderia phymatum (strain DSM 17167 / CIP 108236 / LMG 21445 / STM815) (Burkholderia phymatum), this protein is Phosphoglucosamine mutase.